A 583-amino-acid chain; its full sequence is Aspartate--tRNA ligase (583 aa).

L-aspartate is bound at residue E169. The segment at 193–196 (QLFK) is aspartate. Residue R215 participates in L-aspartate binding. Residues 215 to 217 (RDE) and Q224 each bind ATP. Position 443 (H443) interacts with L-aspartate. ATP is bound at residue E477. R484 lines the L-aspartate pocket. 529 to 532 (GIDR) lines the ATP pocket.

The protein belongs to the class-II aminoacyl-tRNA synthetase family. Type 1 subfamily. Homodimer.

Its subcellular location is the cytoplasm. It carries out the reaction tRNA(Asp) + L-aspartate + ATP = L-aspartyl-tRNA(Asp) + AMP + diphosphate. Functionally, catalyzes the attachment of L-aspartate to tRNA(Asp) in a two-step reaction: L-aspartate is first activated by ATP to form Asp-AMP and then transferred to the acceptor end of tRNA(Asp). The chain is Aspartate--tRNA ligase from Stenotrophomonas maltophilia (strain R551-3).